We begin with the raw amino-acid sequence, 257 residues long: BTB/POZ domain-containing protein KCTD1 (257 aa).

The disordered stretch occupies residues 1–25 (MSRPLITRSPASPLNNQGIPTPAQL). S9 and S12 each carry phosphoserine. Polar residues predominate over residues 9–25 (SPASPLNNQGIPTPAQL). The BTB domain occupies 30–100 (APVHIDVGGH…LRTSKLLIPD (71 aa)).

As to quaternary structure, forms homopentamers. Interacts with KCTD15, probably forming heteropentamers depending on its abundance in a cell-type dependent manner. Interacts with TFAP2A, TFAP2B and TFAP2C via the BTB domain. Post-translationally, sumoylated. Expressed in mammary gland, kidney, brain and ovary.

It is found in the nucleus. May repress the transcriptional activity of AP-2 family members, including TFAP2A, TFAP2B and TFAP2C to various extent. The chain is BTB/POZ domain-containing protein KCTD1 (KCTD1) from Homo sapiens (Human).